We begin with the raw amino-acid sequence, 184 residues long: ADP-ribosylation factor-like protein 2 (184 aa).

The N-myristoyl glycine moiety is linked to residue Gly-2. Residues 23-30 (GLDNAGKT), 66-70 (DIGGQ), and 125-128 (NKQD) contribute to the GTP site.

This sequence belongs to the small GTPase superfamily. Arf family.

Functionally, may be involved in trafficking events within the endosomal system. The chain is ADP-ribosylation factor-like protein 2 (arl2) from Dictyostelium discoideum (Social amoeba).